The sequence spans 118 residues: Small ribosomal subunit protein uS13 (118 aa).

The segment at 94-118 (SLPVRGQRTKTNARTRKGPRRPIKR) is disordered.

This sequence belongs to the universal ribosomal protein uS13 family. In terms of assembly, part of the 30S ribosomal subunit. Forms a loose heterodimer with protein S19. Forms two bridges to the 50S subunit in the 70S ribosome.

Located at the top of the head of the 30S subunit, it contacts several helices of the 16S rRNA. In the 70S ribosome it contacts the 23S rRNA (bridge B1a) and protein L5 of the 50S subunit (bridge B1b), connecting the 2 subunits; these bridges are implicated in subunit movement. Contacts the tRNAs in the A and P-sites. This chain is Small ribosomal subunit protein uS13, found in Dichelobacter nodosus (strain VCS1703A).